The primary structure comprises 685 residues: Keratin, type II cytoskeletal 2 epidermal (685 aa).

The segment at 1–20 is disordered; it reads MSCQISCKSRRGGGGGGGGG. Positions 1–196 are head; that stretch reads MSCQISCKSR…DPEIQNVKSQ (196 aa). R22 bears the Asymmetric dimethylarginine mark. Residues S25 and S28 each carry the phosphoserine modification. The residue at position 52 (R52) is an Omega-N-methylarginine. The residue at position 64 (S64) is a Phosphoserine. Residues 197 to 232 are coil 1A; the sequence is EREQIKTLNNKFASFIDTVRFLEQQNQVLHTKWELL. Positions 197-511 constitute an IF rod domain; it reads EREQIKTLNN…KLLEGEECRM (315 aa). Residues 233 to 251 form a linker 1 region; the sequence is QQLDVGTRTTNLDPVFQAY. Residues 252–343 form a coil 1B region; the sequence is IGILKKQVDR…TLYDTELSQL (92 aa). The linker 12 stretch occupies residues 344-367; it reads QQNVTDTNVILSMDNNRNLDLDSI. Positions 368–507 are coil 2; sequence IAEVQSQYEI…ATYRKLLEGE (140 aa). The tract at residues 508–685 is tail; the sequence is ECRMSGDFSD…CGSGVTFSFR (178 aa). Residues 532 to 685 form a disordered region; sequence VASKAGFGSG…CGSGVTFSFR (154 aa). Over residues 538–678 the composition is skewed to gly residues; it reads FGSGGQSSGG…GSGSGEGCGS (141 aa). An omega-N-methylarginine mark is found at R554, R588, R603, and R653.

Belongs to the intermediate filament family. In terms of assembly, heterotetramer of two type I and two type II keratins. Associates with KRT10.

It localises to the cytoplasm. Probably contributes to terminal cornification. Associated with keratinocyte activation, proliferation and keratinization. Required for maintenance of corneocytes and keratin filaments in suprabasal keratinocytes in the epidermis of the ear, potentially via moderation of expression and localization of keratins and their partner proteins. Plays a role in the establishment of the epidermal barrier on plantar skin. The sequence is that of Keratin, type II cytoskeletal 2 epidermal from Rattus norvegicus (Rat).